Reading from the N-terminus, the 564-residue chain is E3 ubiquitin-protein ligase hrd-like protein 1 (564 aa).

A helical membrane pass occupies residues 17 to 37 (SYLALSVLVAIVASVTVFTTF). Asn53 carries N-linked (GlcNAc...) asparagine glycosylation. A run of 7 helical transmembrane segments spans residues 61–81 (YGLN…HYIL), 86–106 (LIWV…RLII), 123–143 (QAFF…IGPQ), 148–168 (VMPW…QFIT), 185–205 (KISF…FLIS), 215–235 (PAVL…YILF), and 272–292 (LSFA…IFFL). The segment at 335 to 373 (CVVCWELLGTSRRLPCSHQFHDWCLMWWLAQDSSCPTCR) adopts an RING-type; atypical zinc-finger fold. The CUE domain occupies 432-474 (QLQTMLEQVREMFPQMSVDIIMTDLRQSGSAQSTIENILEGRI).

It localises to the membrane. Its function is as follows. Proposed to have a role in neuroprotection. The polypeptide is E3 ubiquitin-protein ligase hrd-like protein 1 (hrdl-1) (Caenorhabditis elegans).